A 496-amino-acid polypeptide reads, in one-letter code: Lysine--tRNA ligase (496 aa).

Glu-403 and Glu-410 together coordinate Mg(2+).

The protein belongs to the class-II aminoacyl-tRNA synthetase family. In terms of assembly, homodimer. It depends on Mg(2+) as a cofactor.

The protein localises to the cytoplasm. The enzyme catalyses tRNA(Lys) + L-lysine + ATP = L-lysyl-tRNA(Lys) + AMP + diphosphate. The sequence is that of Lysine--tRNA ligase from Aster yellows witches'-broom phytoplasma (strain AYWB).